The primary structure comprises 401 residues: Bifunctional enzyme IspD/IspF (401 aa).

Residues 1 to 234 form a 2-C-methyl-D-erythritol 4-phosphate cytidylyltransferase region; that stretch reads MQKPPRTAAI…SRLTAALGDI (234 aa). Residues 235–401 form a 2-C-methyl-D-erythritol 2,4-cyclodiphosphate synthase region; the sequence is RTGTGYDVHA…SPWGAEGQAS (167 aa). A divalent metal cation contacts are provided by D241 and H243. 4-CDP-2-C-methyl-D-erythritol 2-phosphate contacts are provided by residues 241–243 and 267–268; these read DVH and HS. Position 275 (H275) interacts with a divalent metal cation. 4-CDP-2-C-methyl-D-erythritol 2-phosphate contacts are provided by residues 289–291, 365–368, F372, and R375; these read DIG and TTSE.

This sequence in the N-terminal section; belongs to the IspD/TarI cytidylyltransferase family. IspD subfamily. In the C-terminal section; belongs to the IspF family. The cofactor is a divalent metal cation.

The catalysed reaction is 2-C-methyl-D-erythritol 4-phosphate + CTP + H(+) = 4-CDP-2-C-methyl-D-erythritol + diphosphate. The enzyme catalyses 4-CDP-2-C-methyl-D-erythritol 2-phosphate = 2-C-methyl-D-erythritol 2,4-cyclic diphosphate + CMP. It participates in isoprenoid biosynthesis; isopentenyl diphosphate biosynthesis via DXP pathway; isopentenyl diphosphate from 1-deoxy-D-xylulose 5-phosphate: step 2/6. The protein operates within isoprenoid biosynthesis; isopentenyl diphosphate biosynthesis via DXP pathway; isopentenyl diphosphate from 1-deoxy-D-xylulose 5-phosphate: step 4/6. In terms of biological role, bifunctional enzyme that catalyzes the formation of 4-diphosphocytidyl-2-C-methyl-D-erythritol from CTP and 2-C-methyl-D-erythritol 4-phosphate (MEP) (IspD), and catalyzes the conversion of 4-diphosphocytidyl-2-C-methyl-D-erythritol 2-phosphate (CDP-ME2P) to 2-C-methyl-D-erythritol 2,4-cyclodiphosphate (ME-CPP) with a corresponding release of cytidine 5-monophosphate (CMP) (IspF). The polypeptide is Bifunctional enzyme IspD/IspF (Rhodopseudomonas palustris (strain HaA2)).